Consider the following 423-residue polypeptide: 26S proteasome regulatory subunit 6A homolog (423 aa).

ATP is bound at residue 211–218 (GPPGTGKT).

This sequence belongs to the AAA ATPase family.

The protein localises to the cytoplasm. The protein resides in the nucleus. Its function is as follows. The 26S proteasome is involved in the ATP-dependent degradation of ubiquitinated proteins. The regulatory (or ATPase) complex confers ATP dependency and substrate specificity to the 26S complex. In Solanum lycopersicum (Tomato), this protein is 26S proteasome regulatory subunit 6A homolog (TBP1).